The following is a 118-amino-acid chain: MPRVTRGFKARRRRNRVLKLAKGYRGARSRLFKTATEAVDRALCYAYRDRKQRKRDFRRLWITRINAGAKMNDINYSRFIGGLAKAGIELDRKVLANLAVLDAPAFTKLSVIAKEANA.

The protein belongs to the bacterial ribosomal protein bL20 family.

Its function is as follows. Binds directly to 23S ribosomal RNA and is necessary for the in vitro assembly process of the 50S ribosomal subunit. It is not involved in the protein synthesizing functions of that subunit. This chain is Large ribosomal subunit protein bL20, found in Desulfotalea psychrophila (strain LSv54 / DSM 12343).